The following is a 45-amino-acid chain: Large ribosomal subunit protein bL36 (45 aa).

Residues 1-20 (MKVSSSIKADPSKGDKLVRR) form a disordered region.

Belongs to the bacterial ribosomal protein bL36 family.

The protein is Large ribosomal subunit protein bL36 of Chlamydia abortus (strain DSM 27085 / S26/3) (Chlamydophila abortus).